The primary structure comprises 121 residues: Large ribosomal subunit protein uL14c (121 aa).

The protein belongs to the universal ribosomal protein uL14 family. In terms of assembly, part of the 50S ribosomal subunit.

Its subcellular location is the plastid. The protein localises to the chloroplast. Its function is as follows. Binds to 23S rRNA. The protein is Large ribosomal subunit protein uL14c of Tetradesmus obliquus (Green alga).